A 398-amino-acid polypeptide reads, in one-letter code: tRNA(Ile)-lysidine synthase (398 aa).

25-30 contacts ATP; that stretch reads SGGVDS.

Belongs to the tRNA(Ile)-lysidine synthase family.

The protein localises to the cytoplasm. The catalysed reaction is cytidine(34) in tRNA(Ile2) + L-lysine + ATP = lysidine(34) in tRNA(Ile2) + AMP + diphosphate + H(+). Ligates lysine onto the cytidine present at position 34 of the AUA codon-specific tRNA(Ile) that contains the anticodon CAU, in an ATP-dependent manner. Cytidine is converted to lysidine, thus changing the amino acid specificity of the tRNA from methionine to isoleucine. This is tRNA(Ile)-lysidine synthase from Francisella tularensis subsp. tularensis (strain SCHU S4 / Schu 4).